The sequence spans 1127 residues: MRIHQRSAPCVPVLLFLFLPSAPLCARGSKDWTPPQLGEVIESTEQDLAEFDAGLFRADRILDRHDLYRKTMHQLFSTLLEEPKNHAKHLQLIETLEKLAGPESKEIHEFLNRLRNSSTYAVYAARFFHLMERARILMARQEYLKAALLYRSGYELYYDEYLADPSSPGKKEVRARVEHAHAHVSRAKPLLEAVAAARAQYQNTQKRTYAASAHEAARARDAYSAAPAAPAAPGARAPSAAYPHSLTVEAELRILQDFSKTTEESAALTSLVQALGALLKFSRDIEHTGVVFEQLSTRAQKNNETQEAFLAVARKITLGRSKLEFEGILGALQAPAFDAFVDLFEAGRAHVAALHDQARAQFTFAHPPHSGRNIPAPTDTALASAGAWAAVGAGPAGSLIPGAPLSAGVGSRGAWGALPAPVEPLLRQADDALGALARLWAACAPLGAQHGRFPRDYETFGAQIVALSAHADALRATKHAYDFYHALLAFQRAPTVPVSAALRRQDLSQNEAFARDLSELAHHQEFLRRALAETESLSPPADTASTPSPGGAGDTPVPSQADKGGAKQSAAPDTAQKAVAQKAGASEEADASSSPSEMAVRAARAQLHAIQSELLRRFTALKRNRYTAHMAFHQHSGVSALAEYAQQLTSAEEALRFDAKDERRVRALSFVSETGPQQVSKDMEALDRLLSFFSGEEEFLSERGYAYGLQSLRDLRTQFEQFSARVQTLFLAAEQRAIHERLARQEAEYRYRQAVEGLGQDDFGGARKNLVLSREKADLALSLRYDTGYATETDTRLSTLDSSINRRENELVVKDVRAYIAQAKDKYYKGEVLDAERLLIRAKNRWAVTNVTENGEITNWLSVISTAVALKIGRVIPDFAPLYPQMSQLLHHAEQLYLHAAYLNASQRQEMERLLATSRENIHKVLLVYPLNERAGQLSLRIDQLLDPRSFRQQFAKKLDTIRGTYKTESKKAYSLLLDLYAIDARFSGIEKLKQEVEIYLGVRLPPPNPQAIAQSSNFTLAARRIFERRDAALYQVAIQQLDEALKLNPDNDAAAQLKDRIQSLTGDGAVNVLSSEDEKEYQRALQELQKGNKLVASAVVEQLLQKDRNKKSAKIQQLKKRIDAQL.

Residues 1–26 (MRIHQRSAPCVPVLLFLFLPSAPLCA) form the signal peptide. Residues 533 to 600 (ETESLSPPAD…ASSSPSEMAV (68 aa)) form a disordered region. 2 stretches are compositionally biased toward low complexity: residues 536–549 (SLSPPADTASTPSP) and 583–599 (AGASEEADASSSPSEMA). The stretch at 1076-1126 (SEDEKEYQRALQELQKGNKLVASAVVEQLLQKDRNKKSAKIQQLKKRIDAQ) forms a coiled coil.

This is an uncharacterized protein from Treponema pallidum (strain Nichols).